An 803-amino-acid polypeptide reads, in one-letter code: Exocyst complex component 6 (803 aa).

This sequence belongs to the SEC15 family. The exocyst complex is composed of EXOC1, EXOC2, EXOC3, EXOC4, EXOC5, EXOC6, EXOC7 and EXOC8. Interacts with CNTRL. Interacts with RAB11A in a GTP-dependent manner.

Its subcellular location is the cytoplasm. It localises to the perinuclear region. The protein resides in the cell projection. The protein localises to the growth cone. It is found in the midbody. Its subcellular location is the midbody ring. Component of the exocyst complex involved in the docking of exocytic vesicles with fusion sites on the plasma membrane. Together with RAB11A, RAB3IP, RAB8A, PARD3, PRKCI, ANXA2, CDC42 and DNMBP promotes transcytosis of PODXL to the apical membrane initiation sites (AMIS), apical surface formation and lumenogenesis. This chain is Exocyst complex component 6 (EXOC6), found in Canis lupus familiaris (Dog).